Reading from the N-terminus, the 114-residue chain is MIDDMAVPLTFTDAAANKVKSLISEEENTNLKLRVYITGGGCSGFQYGFTFDEKVNDGDLTIEKSGVQLVIDPMSLQYLIGGTVDYTEGLEGSRFTVNNPNATSTCGCGSSFSI.

Residues cysteine 42, cysteine 106, and cysteine 108 each coordinate iron-sulfur cluster.

This sequence belongs to the HesB/IscA family. As to quaternary structure, homodimer. The cofactor is iron-sulfur cluster.

Its function is as follows. Required for insertion of 4Fe-4S clusters for at least IspG. The protein is Iron-sulfur cluster insertion protein ErpA of Haemophilus influenzae (strain PittGG).